A 183-amino-acid chain; its full sequence is Oleosin Bn-V (183 aa).

The tract at residues 1–47 (PARTHHDITTRDQYPLISRDRDQYGMIGRDQYNMSGQNYSKSRQIAK) is polar. Repeats lie at residues 11–20 (RDQYPLISRD) and 21–30 (RDQYGMIGRD). The interval 48-119 (ATTAVTAGDS…AAITVFSWIY (72 aa)) is hydrophobic. A run of 2 helical transmembrane segments spans residues 57 to 77 (SLLV…IVAT) and 99 to 119 (TGFL…SWIY). The disordered stretch occupies residues 154-183 (YGQQHTGEEHDRDRDHRTDRDRTRGTQHTT). A compositionally biased stretch (basic and acidic residues) spans 159-177 (TGEEHDRDRDHRTDRDRTR).

This sequence belongs to the oleosin family.

The protein localises to the lipid droplet. It localises to the membrane. Its function is as follows. May have a structural role to stabilize the lipid body during desiccation of the seed by preventing coalescence of the oil. Probably interacts with both lipid and phospholipid moieties of lipid bodies. May also provide recognition signals for specific lipase anchorage in lipolysis during seedling growth. In Brassica napus (Rape), this protein is Oleosin Bn-V.